A 412-amino-acid polypeptide reads, in one-letter code: Glucose-1-phosphate adenylyltransferase (412 aa).

Residues G163, 179-180 (EK), and S197 each bind alpha-D-glucose 1-phosphate.

The protein belongs to the bacterial/plant glucose-1-phosphate adenylyltransferase family. In terms of assembly, homotetramer.

The enzyme catalyses alpha-D-glucose 1-phosphate + ATP + H(+) = ADP-alpha-D-glucose + diphosphate. The protein operates within glycan biosynthesis; glycogen biosynthesis. Its function is as follows. Involved in the biosynthesis of ADP-glucose, a building block required for the elongation reactions to produce glycogen. Catalyzes the reaction between ATP and alpha-D-glucose 1-phosphate (G1P) to produce pyrophosphate and ADP-Glc. This Frankia casuarinae (strain DSM 45818 / CECT 9043 / HFP020203 / CcI3) protein is Glucose-1-phosphate adenylyltransferase.